The primary structure comprises 317 residues: Putative pyridoxal kinase BUD17 (317 aa).

Substrate contacts are provided by serine 16 and tyrosine 128. ATP-binding positions include 190–191 (TS) and 220–232 (EIPK…SGSG). Aspartate 233 contributes to the substrate binding site.

The protein belongs to the pyridoxine kinase family. The cofactor is a divalent metal cation.

Its subcellular location is the cytoplasm. It is found in the nucleus. The enzyme catalyses pyridoxal + ATP = pyridoxal 5'-phosphate + ADP + H(+). Functionally, required for synthesis of pyridoxal-5-phosphate from vitamin B6. Important for bud site selection. This Saccharomyces cerevisiae (strain ATCC 204508 / S288c) (Baker's yeast) protein is Putative pyridoxal kinase BUD17 (BUD17).